A 607-amino-acid chain; its full sequence is (R)-limonene synthase 1, chloroplastic (607 aa).

The N-terminal 52 residues, Met1–Asp52, are a transit peptide targeting the chloroplast. 2 residues coordinate Mn(2+): Asp343 and Asp347. Substrate-binding residues include Asp343, Asp347, Arg485, Asp488, and Lys504. The DDXXD motif motif lies at Asp343 to Asp347. Asp488 is a Mn(2+) binding site.

The protein belongs to the terpene synthase family. It depends on Mg(2+) as a cofactor. The cofactor is Mn(2+).

It localises to the plastid. It is found in the chloroplast. It carries out the reaction (2E)-geranyl diphosphate = (4R)-limonene + diphosphate. Inhibited by 2-fluorogeranyl diphosphate (FGPP) and 2-fluoroneryl diphosphate (FNPP). Functionally, catalyzes the conversion of geranyl diphosphate to (+)-(4R)-limonene. Produces exclusively the (+)-enantiomer. Can use neryl diphosphate as substrate. Has no activity with farnesyl diphosphate. This chain is (R)-limonene synthase 1, chloroplastic, found in Citrus sinensis (Sweet orange).